The sequence spans 444 residues: Putative zinc metalloprotease XF_1047 (444 aa).

His22 provides a ligand contact to Zn(2+). Residue Glu23 is part of the active site. Residue His26 participates in Zn(2+) binding. A helical membrane pass occupies residues 98-120; the sequence is IAIVAAGPLANLLLCMLLLWVLF. Residues 192-276 form the PDZ domain; it reads TLELSKLKQP…DGHPGMIEIR (85 aa). 2 helical membrane-spanning segments follow: residues 371 to 393 and 418 to 440; these read VGWFIYFLSLLSLSLAIINLFPI and AMAAGQYIGLALLAGLMGLAFYN.

The protein belongs to the peptidase M50B family. Zn(2+) serves as cofactor.

The protein localises to the cell inner membrane. This is Putative zinc metalloprotease XF_1047 from Xylella fastidiosa (strain 9a5c).